The sequence spans 267 residues: Interleukin-2 receptor subunit alpha (267 aa).

A signal peptide spans 1-21; sequence MEPHLLMLGFLSFTIVPGCWA. One can recognise a Sushi 1 domain in the interval 22 to 79; sequence ELCLYDPPEVPNATFKALSYKNGTILNCECKRGFRRLNELVYMACLGNSWSNNCQCTS. Residues 22 to 235 lie on the Extracellular side of the membrane; the sequence is ELCLYDPPEV…ETFVFTKEYQ (214 aa). Cystine bridges form between Cys-24-Cys-66, Cys-49-Cys-75, and Cys-51-Cys-77. N-linked (GlcNAc...) asparagine glycans are attached at residues Asn-33 and Asn-43. The span at 82–93 shows a compositional bias: polar residues; the sequence is HDNSREQVTPQP. The disordered stretch occupies residues 82-108; the sequence is HDNSREQVTPQPEGQKEQQTTDTQKST. Low complexity predominate over residues 98–108; it reads EQQTTDTQKST. The Sushi 2 domain occupies 118–181; sequence GHCREPPPWR…WTHPQLTCVD (64 aa). Cystine bridges form between Cys-120/Cys-163 and Cys-147/Cys-179. The segment at 191–215 is disordered; the sequence is SEESQGSRNSFPESEASCPTPNTDF. A compositionally biased stretch (polar residues) spans 192-215; it reads EESQGSRNSFPESEASCPTPNTDF. The chain crosses the membrane as a helical span at residues 236-256; the sequence is VAVASCIFLLLSILLLSGFTW. Residues 257 to 267 are Cytoplasmic-facing; the sequence is QHRWRKSRRTI.

In terms of assembly, non-covalent dimer of an alpha and a beta subunit. IL2R exists in 3 different forms: a high affinity dimer, an intermediate affinity monomer (beta subunit), and a low affinity monomer (alpha subunit). The high and intermediate affinity forms also associate with a gamma subunit.

Its subcellular location is the membrane. Functionally, receptor for interleukin-2. The receptor is involved in the regulation of immune tolerance by controlling regulatory T cells (TREGs) activity. TREGs suppress the activation and expansion of autoreactive T-cells. This Rattus norvegicus (Rat) protein is Interleukin-2 receptor subunit alpha (Il2ra).